A 501-amino-acid polypeptide reads, in one-letter code: Aspartyl/glutamyl-tRNA(Asn/Gln) amidotransferase subunit B (501 aa).

It belongs to the GatB/GatE family. GatB subfamily. Heterotrimer of A, B and C subunits.

It carries out the reaction L-glutamyl-tRNA(Gln) + L-glutamine + ATP + H2O = L-glutaminyl-tRNA(Gln) + L-glutamate + ADP + phosphate + H(+). The enzyme catalyses L-aspartyl-tRNA(Asn) + L-glutamine + ATP + H2O = L-asparaginyl-tRNA(Asn) + L-glutamate + ADP + phosphate + 2 H(+). Functionally, allows the formation of correctly charged Asn-tRNA(Asn) or Gln-tRNA(Gln) through the transamidation of misacylated Asp-tRNA(Asn) or Glu-tRNA(Gln) in organisms which lack either or both of asparaginyl-tRNA or glutaminyl-tRNA synthetases. The reaction takes place in the presence of glutamine and ATP through an activated phospho-Asp-tRNA(Asn) or phospho-Glu-tRNA(Gln). This Mycobacterium sp. (strain KMS) protein is Aspartyl/glutamyl-tRNA(Asn/Gln) amidotransferase subunit B.